Here is a 99-residue protein sequence, read N- to C-terminus: UPF0751 protein BCE_A0020 (99 aa).

This sequence belongs to the UPF0751 family.

This chain is UPF0751 protein BCE_A0020, found in Bacillus cereus (strain ATCC 10987 / NRS 248).